The sequence spans 144 residues: Intraflagellar transport protein 25 homolog (144 aa).

Ca(2+)-binding residues include Asn29, Asp32, and Thr37.

Belongs to the IFT25 family. As to quaternary structure, component of the IFT complex B, at least composed of IFT20, IFT22, IFT25, IFT27, IFT46, IFT52, TRAF3IP1/IFT54, IFT57, IFT74, IFT80, IFT81, and IFT88. Interacts with IFT27. Interacts with IFT88. As to expression, detected in placenta.

The protein localises to the cell projection. It is found in the cilium. In terms of biological role, component of the IFT complex B required for sonic hedgehog/SHH signaling. May mediate transport of SHH components: required for the export of SMO and PTCH1 receptors out of the cilium and the accumulation of GLI2 at the ciliary tip in response to activation of the SHH pathway, suggesting it is involved in the dynamic transport of SHH signaling molecules within the cilium. Not required for ciliary assembly. Its role in intraflagellar transport is mainly seen in tissues rich in ciliated cells such as kidney and testis. Essential for male fertility, spermiogenesis and sperm flagella formation. Plays a role in the early development of the kidney. May be involved in the regulation of ureteric bud initiation. The protein is Intraflagellar transport protein 25 homolog of Homo sapiens (Human).